A 569-amino-acid polypeptide reads, in one-letter code: 2-succinyl-5-enolpyruvyl-6-hydroxy-3-cyclohexene-1-carboxylate synthase (569 aa).

The protein belongs to the TPP enzyme family. MenD subfamily. In terms of assembly, homodimer. Mg(2+) is required as a cofactor. Requires Mn(2+) as cofactor. Thiamine diphosphate serves as cofactor.

It carries out the reaction isochorismate + 2-oxoglutarate + H(+) = 5-enolpyruvoyl-6-hydroxy-2-succinyl-cyclohex-3-ene-1-carboxylate + CO2. The protein operates within quinol/quinone metabolism; 1,4-dihydroxy-2-naphthoate biosynthesis; 1,4-dihydroxy-2-naphthoate from chorismate: step 2/7. It functions in the pathway cofactor biosynthesis; phylloquinone biosynthesis. In terms of biological role, catalyzes the thiamine diphosphate-dependent decarboxylation of 2-oxoglutarate and the subsequent addition of the resulting succinic semialdehyde-thiamine pyrophosphate anion to isochorismate to yield 2-succinyl-5-enolpyruvyl-6-hydroxy-3-cyclohexene-1-carboxylate (SEPHCHC). The protein is 2-succinyl-5-enolpyruvyl-6-hydroxy-3-cyclohexene-1-carboxylate synthase of Microcystis aeruginosa (strain NIES-843 / IAM M-2473).